The chain runs to 1883 residues: Lysophospholipase NTE1 (1883 aa).

Over 1–75 (MSQVPVASPA…LLRVVLASLN (75 aa)) the chain is Cytoplasmic. Residues 76–96 (LIRILATFSTITVPSLVYAIL) form a helical membrane-spanning segment. Residues 97–103 (HYSLTLQ) lie on the Lumenal side of the membrane. A helical membrane pass occupies residues 104 to 124 (LNFPSLALLFLTSLISAFIWL). Residues 125-1883 (RYRHLNKYER…AGISARRNSI (1759 aa)) lie on the Cytoplasmic side of the membrane. 6 disordered regions span residues 284–327 (HLAP…FNPP), 355–410 (ERLG…LYHA), 618–693 (SQRS…MVGP), 716–764 (SAQP…RKGS), 921–1069 (EEDR…ATNS), and 1084–1108 (LHQQ…GKRS). Polar residues predominate over residues 311–327 (NNATAPTSPYSSAFNPP). Residues 372-383 (ARTASSGTASAT) are compositionally biased toward low complexity. The span at 650 to 668 (PSLTTSSKQSNQKPTSSRI) shows a compositional bias: polar residues. A nucleoside 3',5'-cyclic phosphate contacts are provided by residues 863–1158 (AGHG…RRPI) and 1166–1285 (RLLS…IARR). Residues 936 to 948 (TDASSGSSRQNRP) show a composition bias toward polar residues. The segment covering 964 to 974 (LLDERNLREAD) has biased composition (basic and acidic residues). Polar residues-rich tracts occupy residues 988–998 (ISSNGDGNSGS) and 1084–1100 (LHQQ…QSSQ). The PNPLA domain occupies 1544-1708 (LVLGGGGARG…VDNLPVTVML (165 aa)). The short motif at 1548–1553 (GGGARG) is the GXGXXG element. The GXSXG signature appears at 1575–1579 (GTSIG). The active-site Nucleophile is Ser1577. Asp1695 functions as the Proton acceptor in the catalytic mechanism. Residues 1695–1697 (DGG) carry the DGA/G motif. The segment at 1852–1883 (DESGVGGGVRKIRKKRRRTRRKAGISARRNSI) is disordered. Positions 1861–1874 (RKIRKKRRRTRRKA) are enriched in basic residues.

It belongs to the NTE family.

The protein localises to the endoplasmic reticulum membrane. The enzyme catalyses a 1-acyl-sn-glycero-3-phosphocholine + H2O = sn-glycerol 3-phosphocholine + a fatty acid + H(+). Inhibited by organophosphorus esters. In terms of biological role, intracellular phospholipase B that catalyzes the double deacylation of phosphatidylcholine (PC) to glycerophosphocholine (GroPCho). Plays an important role in membrane lipid homeostasis. Responsible for the rapid PC turnover in response to inositol, elevated temperatures, or when choline is present in the growth medium. The sequence is that of Lysophospholipase NTE1 (NTE1) from Mycosarcoma maydis (Corn smut fungus).